Here is a 379-residue protein sequence, read N- to C-terminus: NADH-quinone oxidoreductase subunit D 1 (379 aa).

The protein belongs to the complex I 49 kDa subunit family. NDH-1 is composed of 14 different subunits. Subunits NuoB, C, D, E, F, and G constitute the peripheral sector of the complex.

The protein resides in the cell inner membrane. It carries out the reaction a quinone + NADH + 5 H(+)(in) = a quinol + NAD(+) + 4 H(+)(out). Functionally, NDH-1 shuttles electrons from NADH, via FMN and iron-sulfur (Fe-S) centers, to quinones in the respiratory chain. The immediate electron acceptor for the enzyme in this species is believed to be ubiquinone. Couples the redox reaction to proton translocation (for every two electrons transferred, four hydrogen ions are translocated across the cytoplasmic membrane), and thus conserves the redox energy in a proton gradient. This Anaeromyxobacter sp. (strain K) protein is NADH-quinone oxidoreductase subunit D 1.